The sequence spans 252 residues: Small ribosomal subunit protein uS3 (252 aa).

The KH type-2 domain maps to 39 to 109; it reads IRNYVQTRLK…EVKIDVVEVV (71 aa). The span at 221–241 shows a compositional bias: basic and acidic residues; that stretch reads EMKRIKERRSDSGPRSRNDRS. A disordered region spans residues 221–252; the sequence is EMKRIKERRSDSGPRSRNDRSQKRRRRPNDRG. Positions 242–252 are enriched in basic residues; sequence QKRRRRPNDRG.

This sequence belongs to the universal ribosomal protein uS3 family. In terms of assembly, part of the 30S ribosomal subunit. Forms a tight complex with proteins S10 and S14.

Binds the lower part of the 30S subunit head. Binds mRNA in the 70S ribosome, positioning it for translation. This is Small ribosomal subunit protein uS3 from Chlorobium luteolum (strain DSM 273 / BCRC 81028 / 2530) (Pelodictyon luteolum).